Here is a 1043-residue protein sequence, read N- to C-terminus: MNTEGESSKESLANREERILDFWKTHDIFQKSLKNREGKTLYSFYDGPPFATGLPHYGHLLAGTIKDVVGRFATMDGYYVPRRFGWDCHGVPVEYEVEKSLDLTTPGAIEDFGVAKFNEECRKIVFRYVDEWERYVHRLGRWVDFSVTWKTMDASFMESVWWVFRSLYDQGLVYEGVKVVPFSTKLGTPLSNFEAGQNYKEVDDPSVVIKFALHGDPASLLVWTTTPWTLVSNMAAAVGPEITYVRVADKVSGEQWILGQGCLSRWFSDPDSYEILESFLGTALVGKSYEPPFSFFEHKRAEGAYKILSGSFVEESEGTGVVHMAPAFGEADFFVCKEHHVPIVCPVDNHGCFTEEIPEYQGQYIKSCDKGIIKSLKNLGKVFYHGTVMHRYPFCWRTDTPLIYKTVNSWFVSVEKIKDKMLRANQKIHWVPEHIKEGRFGKWLDGARDWAISRNRYWGTPIPIWKSKEGEILVIGSVKELEELTGEKISDLHCHFIDQLKVEKEGKTFQRVPYVFDCWFDSGAMPYAQNHYPFENQKETEAGFPADFIAEGLDQTRGWFYTLTVISSALFDQTAFKNAIVNGIVLAEDGNKMSKRLNNYPSPMGIMNTYGADALRLYLLDSVVVKAEDLRFSDKGVESILKQILLPLTNVLSFFKTYTDLYGFDADNYDKEEITYSEIDRWILSNLYTVVGKVRESMSSYNLNTAVNPFVTFIDDLTNWYIRRCRRRFWESEDTPDRRAAFATLYEVLTVFCRVIAPFIPFISEDIYQQIKTEHSAESVHLCDFPHIDLAKVFPDLEQRMSDAREIVGLGHSLRKEHKLKVRQPLANFYIVGPKDRLDELTSFEQLIAEELNVKNIVFYKETPSFVKTTVKPNFRSLGRKVGEKIKDVQRALSNLSQDQIQQLLKQQYLLLNLGFEEITLGIDDVVISWETDPGYVARSSSLFTVVLDCQLTEDLIVEAISRELVNKINTMRRNHKLHVSDRILLQIHSSEDVEKAFLHYEDYICEETLTVQFEFKDSVEGEEWDINGHPTVIALTVASKAN.

The 'HIGH' region motif lies at 49 to 59 (PFATGLPHYGH). The short motif at 592-596 (KMSKR) is the 'KMSKS' region element. ATP is bound at residue Lys595.

It belongs to the class-I aminoacyl-tRNA synthetase family. IleS type 2 subfamily. Monomer. Zn(2+) is required as a cofactor.

Its subcellular location is the cytoplasm. The catalysed reaction is tRNA(Ile) + L-isoleucine + ATP = L-isoleucyl-tRNA(Ile) + AMP + diphosphate. Catalyzes the attachment of isoleucine to tRNA(Ile). As IleRS can inadvertently accommodate and process structurally similar amino acids such as valine, to avoid such errors it has two additional distinct tRNA(Ile)-dependent editing activities. One activity is designated as 'pretransfer' editing and involves the hydrolysis of activated Val-AMP. The other activity is designated 'posttransfer' editing and involves deacylation of mischarged Val-tRNA(Ile). In Chlamydia caviae (strain ATCC VR-813 / DSM 19441 / 03DC25 / GPIC) (Chlamydophila caviae), this protein is Isoleucine--tRNA ligase.